We begin with the raw amino-acid sequence, 274 residues long: Speedy protein C (274 aa).

The interval 37 to 169 (HQEVQAFLSL…FHWAWTRDRR (133 aa)) is speedy/Ringo box; Required for CDK-binding.

The protein belongs to the Speedy/Ringo family. As to quaternary structure, interacts with CDK1 and CDK2. Interacts with AURKB. As to expression, expressed in a variety of tissues including bone marrow, kidney, small intestine, liver, placenta and testis.

It is found in the cytoplasm. In terms of biological role, promotes progression through the cell cycle via binding and activation of CDK1 and CDK2. Involved in the spindle-assembly checkpoint. Required for recruitment of MAD2L1, BUBR1 and BUB1 to kinetochores. Required for the correct localization of the active form of Aurora B in prometaphase. In Homo sapiens (Human), this protein is Speedy protein C.